The sequence spans 433 residues: Glutamate-1-semialdehyde 2,1-aminomutase (433 aa).

At Lys-273 the chain carries N6-(pyridoxal phosphate)lysine.

This sequence belongs to the class-III pyridoxal-phosphate-dependent aminotransferase family. HemL subfamily. In terms of assembly, homodimer. Pyridoxal 5'-phosphate is required as a cofactor.

It is found in the cytoplasm. It catalyses the reaction (S)-4-amino-5-oxopentanoate = 5-aminolevulinate. Its pathway is porphyrin-containing compound metabolism; protoporphyrin-IX biosynthesis; 5-aminolevulinate from L-glutamyl-tRNA(Glu): step 2/2. It functions in the pathway porphyrin-containing compound metabolism; chlorophyll biosynthesis. This chain is Glutamate-1-semialdehyde 2,1-aminomutase, found in Gloeothece citriformis (strain PCC 7424) (Cyanothece sp. (strain PCC 7424)).